Here is a 159-residue protein sequence, read N- to C-terminus: Growth arrest and DNA damage-inducible protein GADD45 gamma (159 aa).

The tract at residues 43–86 is homodimerization; that stretch reads VYESAKVLNVDPDNVTFCVLAADEEDEGDIALQIHFTLIQAFCC.

Belongs to the GADD45 family. Undergoes concentration-dependent homodimerization, which is required for growth inhibititory activity and enhances interaction with PCNA. Interacts with GADD45GIP1. Interacts with PCNA.

In terms of biological role, involved in the regulation of growth and apoptosis. Mediates activation of stress-responsive MTK1/MEKK4 MAPKKK. The polypeptide is Growth arrest and DNA damage-inducible protein GADD45 gamma (Gadd45g) (Mus musculus (Mouse)).